The sequence spans 154 residues: dCTP deaminase (154 aa).

DCTP is bound by residues 79–84 (RSSLAR), aspartate 95, glutamine 124, and tyrosine 138.

It belongs to the dCTP deaminase family. Homotrimer.

It catalyses the reaction dCTP + H2O + H(+) = dUTP + NH4(+). The protein operates within pyrimidine metabolism; dUMP biosynthesis; dUMP from dCTP (dUTP route): step 1/2. Functionally, catalyzes the deamination of dCTP to dUTP. This chain is dCTP deaminase, found in Pyrococcus abyssi (strain GE5 / Orsay).